The sequence spans 464 residues: Glycine receptor subunit alpha-3 (464 aa).

An N-terminal signal peptide occupies residues 1-33 (MAHVRHFRTLVSGFYFWEAALLLSLVATKETNS). Residues 34–255 (ARSRSAPMSP…RFHLERQMGY (222 aa)) lie on the Extracellular side of the membrane. A glycan (N-linked (GlcNAc...) asparagine) is linked at N71. A disulfide bridge links C171 with C185. Zn(2+) contacts are provided by E225 and D227. Residues C231 and C242 are joined by a disulfide bond. 235–240 (YNTGKF) provides a ligand contact to strychnine. H248 lines the Zn(2+) pocket. The chain crosses the membrane as a helical span at residues 256 to 277 (YLIQMYIPSLLIVILSWVSFWI). Topologically, residues 278–282 (NMDAA) are cytoplasmic. Residues 283-303 (PARVALGITTVLTMTTQSSGS) form a helical membrane-spanning segment. Over 304–314 (RASLPKVSYVK) the chain is Extracellular. A helical transmembrane segment spans residues 315–335 (AIDIWMAVCLLFVFSALLEYA). Topologically, residues 336 to 430 (AVNFVSRQHK…FIDRAKKIDT (95 aa)) are cytoplasmic. S370 carries the post-translational modification Phosphoserine. S379 is subject to Phosphoserine; by PKA. The helical transmembrane segment at 431–451 (ISRACFPLAFLIFNIFYWVIY) threads the bilayer. At 452–464 (KILRHEDIHQQQD) the chain is on the extracellular side.

This sequence belongs to the ligand-gated ion channel (TC 1.A.9) family. Glycine receptor (TC 1.A.9.3) subfamily. GLRA3 sub-subfamily. Homopentamer (in vitro). Heteropentamer composed of GLRA3 and GLRB. Both homopentamers and heteropentamers form functional ion channels, but their characteristics are subtly different. Post-translationally, phosphorylated by PKA; this causes down-regulation of channel activity. Dephosphorylated in response to activation of HTR1A signaling; this increases channel activity. In terms of tissue distribution, detected in brainstem, also in neurons that control rhythmic breathing. Detected in superficial laminae of the dorsal horn of the thoracic spinal cord. Detected in dentate gyrus in hippocampus, especially in stratum granulare. Detected in the inner plexiform layer in the retina (at protein level). Detected in midbrain, thalamus, brain cortex, hippocampus, and at lower levels in cerebellum.

The protein localises to the postsynaptic cell membrane. It localises to the synapse. Its subcellular location is the perikaryon. It is found in the cell projection. The protein resides in the dendrite. The protein localises to the cell membrane. The enzyme catalyses chloride(in) = chloride(out). Its activity is regulated as follows. Inhibited by prostaglandin E2, probably via PKA-mediated phosphorylation at Ser-379. Functionally, glycine receptors are ligand-gated chloride channels. Channel opening is triggered by extracellular glycine. Channel characteristics depend on the subunit composition; heteropentameric channels display faster channel closure. Plays an important role in the down-regulation of neuronal excitability. Contributes to the generation of inhibitory postsynaptic currents. Contributes to increased pain perception in response to increased prostaglandin E2 levels. Plays a role in the regulation of breathing rhythm, especially of the duration of the postinspiratory phase. Plays a role in cellular responses to ethanol. The polypeptide is Glycine receptor subunit alpha-3 (Glra3) (Mus musculus (Mouse)).